The chain runs to 173 residues: Large ribosomal subunit protein uL10 (173 aa).

This sequence belongs to the universal ribosomal protein uL10 family. In terms of assembly, part of the ribosomal stalk of the 50S ribosomal subunit. The N-terminus interacts with L11 and the large rRNA to form the base of the stalk. The C-terminus forms an elongated spine to which L12 dimers bind in a sequential fashion forming a multimeric L10(L12)X complex.

Functionally, forms part of the ribosomal stalk, playing a central role in the interaction of the ribosome with GTP-bound translation factors. This chain is Large ribosomal subunit protein uL10, found in Acidithiobacillus ferrooxidans (strain ATCC 23270 / DSM 14882 / CIP 104768 / NCIMB 8455) (Ferrobacillus ferrooxidans (strain ATCC 23270)).